The primary structure comprises 243 residues: Ubiquinone/menaquinone biosynthesis C-methyltransferase UbiE (243 aa).

S-adenosyl-L-methionine contacts are provided by residues T69, D90, and D116–A117.

This sequence belongs to the class I-like SAM-binding methyltransferase superfamily. MenG/UbiE family.

It catalyses the reaction a 2-demethylmenaquinol + S-adenosyl-L-methionine = a menaquinol + S-adenosyl-L-homocysteine + H(+). It carries out the reaction a 2-methoxy-6-(all-trans-polyprenyl)benzene-1,4-diol + S-adenosyl-L-methionine = a 5-methoxy-2-methyl-3-(all-trans-polyprenyl)benzene-1,4-diol + S-adenosyl-L-homocysteine + H(+). Its pathway is quinol/quinone metabolism; menaquinone biosynthesis; menaquinol from 1,4-dihydroxy-2-naphthoate: step 2/2. It functions in the pathway cofactor biosynthesis; ubiquinone biosynthesis. In terms of biological role, methyltransferase required for the conversion of demethylmenaquinol (DMKH2) to menaquinol (MKH2) and the conversion of 2-polyprenyl-6-methoxy-1,4-benzoquinol (DDMQH2) to 2-polyprenyl-3-methyl-6-methoxy-1,4-benzoquinol (DMQH2). The protein is Ubiquinone/menaquinone biosynthesis C-methyltransferase UbiE of Ralstonia pickettii (strain 12J).